We begin with the raw amino-acid sequence, 627 residues long: DNA-directed RNA polymerase subunit gamma (627 aa).

Positions 70, 72, 85, and 88 each coordinate Zn(2+). Asp-468, Asp-470, and Asp-472 together coordinate Mg(2+).

Belongs to the RNA polymerase beta' chain family. RpoC1 subfamily. As to quaternary structure, in cyanobacteria the RNAP catalytic core is composed of 2 alpha, 1 beta, 1 beta', 1 gamma and 1 omega subunit. When a sigma factor is associated with the core the holoenzyme is formed, which can initiate transcription. Requires Mg(2+) as cofactor. It depends on Zn(2+) as a cofactor.

It catalyses the reaction RNA(n) + a ribonucleoside 5'-triphosphate = RNA(n+1) + diphosphate. Its function is as follows. DNA-dependent RNA polymerase catalyzes the transcription of DNA into RNA using the four ribonucleoside triphosphates as substrates. The sequence is that of DNA-directed RNA polymerase subunit gamma from Synechococcus sp. (strain JA-3-3Ab) (Cyanobacteria bacterium Yellowstone A-Prime).